The following is a 288-amino-acid chain: Acetyl-coenzyme A carboxylase carboxyl transferase subunit beta (288 aa).

One can recognise a CoA carboxyltransferase N-terminal domain in the interval 33–288 (LFSQCPGCKH…LVRLHGGSPR (256 aa)). Cysteine 37, cysteine 40, cysteine 55, and cysteine 58 together coordinate Zn(2+). The C4-type zinc finger occupies 37–58 (CPGCKHTIYQKDLGSERICPHC).

This sequence belongs to the AccD/PCCB family. As to quaternary structure, acetyl-CoA carboxylase is a heterohexamer composed of biotin carboxyl carrier protein (AccB), biotin carboxylase (AccC) and two subunits each of ACCase subunit alpha (AccA) and ACCase subunit beta (AccD). Zn(2+) is required as a cofactor.

It localises to the cytoplasm. It carries out the reaction N(6)-carboxybiotinyl-L-lysyl-[protein] + acetyl-CoA = N(6)-biotinyl-L-lysyl-[protein] + malonyl-CoA. It participates in lipid metabolism; malonyl-CoA biosynthesis; malonyl-CoA from acetyl-CoA: step 1/1. In terms of biological role, component of the acetyl coenzyme A carboxylase (ACC) complex. Biotin carboxylase (BC) catalyzes the carboxylation of biotin on its carrier protein (BCCP) and then the CO(2) group is transferred by the transcarboxylase to acetyl-CoA to form malonyl-CoA. The chain is Acetyl-coenzyme A carboxylase carboxyl transferase subunit beta from Streptococcus pneumoniae serotype 4 (strain ATCC BAA-334 / TIGR4).